The chain runs to 547 residues: Glucose-6-phosphate isomerase (547 aa).

Catalysis depends on Glu353, which acts as the Proton donor. Catalysis depends on residues His384 and Lys512.

The protein belongs to the GPI family.

It localises to the cytoplasm. The catalysed reaction is alpha-D-glucose 6-phosphate = beta-D-fructose 6-phosphate. The protein operates within carbohydrate biosynthesis; gluconeogenesis. It functions in the pathway carbohydrate degradation; glycolysis; D-glyceraldehyde 3-phosphate and glycerone phosphate from D-glucose: step 2/4. Catalyzes the reversible isomerization of glucose-6-phosphate to fructose-6-phosphate. The polypeptide is Glucose-6-phosphate isomerase (Campylobacter jejuni subsp. doylei (strain ATCC BAA-1458 / RM4099 / 269.97)).